A 555-amino-acid polypeptide reads, in one-letter code: Urocanate hydratase (555 aa).

NAD(+) contacts are provided by residues 52-53, Q130, 176-178, E196, R201, 242-243, 263-267, 273-274, and Y322; these read GG, GMG, NA, QTSAH, and YL. C410 is a catalytic residue. G492 contacts NAD(+).

Belongs to the urocanase family. NAD(+) is required as a cofactor.

It is found in the cytoplasm. It catalyses the reaction 4-imidazolone-5-propanoate = trans-urocanate + H2O. Its pathway is amino-acid degradation; L-histidine degradation into L-glutamate; N-formimidoyl-L-glutamate from L-histidine: step 2/3. In terms of biological role, catalyzes the conversion of urocanate to 4-imidazolone-5-propionate. The polypeptide is Urocanate hydratase (Shewanella baltica (strain OS155 / ATCC BAA-1091)).